Consider the following 84-residue polypeptide: Small ribosomal subunit protein bS16 (84 aa).

This sequence belongs to the bacterial ribosomal protein bS16 family.

This chain is Small ribosomal subunit protein bS16, found in Ralstonia pickettii (strain 12J).